Here is a 662-residue protein sequence, read N- to C-terminus: Transketolase (662 aa).

A substrate-binding site is contributed by histidine 28. Thiamine diphosphate is bound by residues histidine 68 and 115-117 (GPL). Residue aspartate 156 coordinates Mg(2+). 2 residues coordinate thiamine diphosphate: glycine 157 and asparagine 186. Positions 186 and 188 each coordinate Mg(2+). Substrate is bound by residues histidine 261, arginine 356, and serine 383. Histidine 261 provides a ligand contact to thiamine diphosphate. Catalysis depends on glutamate 410, which acts as the Proton donor. Phenylalanine 436 contributes to the thiamine diphosphate binding site. Residues histidine 460, aspartate 468, and arginine 519 each coordinate substrate.

It belongs to the transketolase family. Homodimer. Mg(2+) serves as cofactor. The cofactor is Ca(2+). It depends on Mn(2+) as a cofactor. Requires Co(2+) as cofactor. Thiamine diphosphate is required as a cofactor.

The enzyme catalyses D-sedoheptulose 7-phosphate + D-glyceraldehyde 3-phosphate = aldehydo-D-ribose 5-phosphate + D-xylulose 5-phosphate. The protein operates within carbohydrate biosynthesis; Calvin cycle. It participates in carbohydrate degradation; pentose phosphate pathway. Its function is as follows. Catalyzes the transfer of a two-carbon ketol group from a ketose donor to an aldose acceptor, via a covalent intermediate with the cofactor thiamine pyrophosphate. This is Transketolase (tkt) from Staphylococcus epidermidis (strain ATCC 12228 / FDA PCI 1200).